A 299-amino-acid chain; its full sequence is tRNA dimethylallyltransferase (299 aa).

Residue 11 to 18 (GPTAVGKT) participates in ATP binding. Residue 13–18 (TAVGKT) participates in substrate binding. Positions 36–39 (DSQQ) are interaction with substrate tRNA.

It belongs to the IPP transferase family. Monomer. Mg(2+) is required as a cofactor.

It carries out the reaction adenosine(37) in tRNA + dimethylallyl diphosphate = N(6)-dimethylallyladenosine(37) in tRNA + diphosphate. Catalyzes the transfer of a dimethylallyl group onto the adenine at position 37 in tRNAs that read codons beginning with uridine, leading to the formation of N6-(dimethylallyl)adenosine (i(6)A). The sequence is that of tRNA dimethylallyltransferase from Streptococcus pyogenes serotype M6 (strain ATCC BAA-946 / MGAS10394).